The primary structure comprises 667 residues: DNA ligase (667 aa).

Residues 32-36 (DSEYD), 81-82 (SL), and Glu110 contribute to the NAD(+) site. Lys112 serves as the catalytic N6-AMP-lysine intermediate. The NAD(+) site is built by Arg133, Glu167, Lys283, and Lys307. Zn(2+)-binding residues include Cys401, Cys404, Cys419, and Cys424. The 82-residue stretch at 586–667 (EGHPEFSGKT…FVDKQNELNS (82 aa)) folds into the BRCT domain.

The protein belongs to the NAD-dependent DNA ligase family. LigA subfamily. Mg(2+) serves as cofactor. It depends on Mn(2+) as a cofactor.

It catalyses the reaction NAD(+) + (deoxyribonucleotide)n-3'-hydroxyl + 5'-phospho-(deoxyribonucleotide)m = (deoxyribonucleotide)n+m + AMP + beta-nicotinamide D-nucleotide.. Functionally, DNA ligase that catalyzes the formation of phosphodiester linkages between 5'-phosphoryl and 3'-hydroxyl groups in double-stranded DNA using NAD as a coenzyme and as the energy source for the reaction. It is essential for DNA replication and repair of damaged DNA. The polypeptide is DNA ligase (Staphylococcus aureus (strain COL)).